The following is a 430-amino-acid chain: Small ribosomal subunit protein uS5m (430 aa).

Residues 108 to 128 (AGARKGRGKRTKRKRRKDLNR) are disordered. Basic residues predominate over residues 111–125 (RKGRGKRTKRKRRKD). Positions 218 to 282 (FDTRILEVRN…NRAVHYLHYI (65 aa)) constitute an S5 DRBM domain.

The protein belongs to the universal ribosomal protein uS5 family. In terms of assembly, component of the mitochondrial ribosome small subunit (28S) which comprises a 12S rRNA and about 30 distinct proteins.

The protein localises to the mitochondrion. This Bos taurus (Bovine) protein is Small ribosomal subunit protein uS5m (MRPS5).